The following is a 225-amino-acid chain: MSRPRKRLAGTSGSDKGLSGKRTKTENSGEALAKVEDSNPQKTSATKNCLKNLSSHWLMKSEPESRLEKGVDVKFSIEDLKAQPKQTTCWDGVRNYQARNFLRAMKLGEEAFFYHSNCKEPGIAGLMKIVKEAYPDHTQFEKNNPHYDPSSKEDNPKWSMVDVQFVRMMKRFIPLAELKSYHQAHKATGGPLKNMVLFTRQRLSIQPLTQEEFDFVLSLEEKEPS.

The tract at residues 1-47 (MSRPRKRLAGTSGSDKGLSGKRTKTENSGEALAKVEDSNPQKTSATK) is disordered. Residues 5-10 (RKRLAG) carry the Nuclear localization signal motif. Residues 23–39 (TKTENSGEALAKVEDSN) are compositionally biased toward basic and acidic residues.

Phosphorylated.

The protein localises to the nucleus. In terms of biological role, specifically binds 5-hydroxymethylcytosine (5hmC), suggesting that it acts as a specific reader of 5hmC. The sequence is that of Thymocyte nuclear protein 1 (THYN1) from Homo sapiens (Human).